The following is a 738-amino-acid chain: Dipeptidyl peptidase 3 (738 aa).

A2 bears the N-acetylalanine mark. H450 is a Zn(2+) binding site. E451 is a catalytic residue. Zn(2+)-binding residues include H455 and E508.

The protein belongs to the peptidase M49 family. Zn(2+) is required as a cofactor.

The protein localises to the cytoplasm. It is found in the cytosol. It catalyses the reaction Release of an N-terminal dipeptide from a peptide comprising four or more residues, with broad specificity. Also acts on dipeptidyl 2-naphthylamides.. Cleaves and degrades bioactive peptides, including angiotensin, Leu-enkephalin and Met-enkephalin. Also cleaves Arg-Arg-beta-naphthylamide (in vitro). The polypeptide is Dipeptidyl peptidase 3 (Dpp3) (Mus musculus (Mouse)).